Here is a 212-residue protein sequence, read N- to C-terminus: MNYPHPIIAREGWPFIAIAAVVALLIHFFAGFGVSWLFWLLLIFVVQFFRDPARPIPTQANAVLCPADGRIVAVETAHDPYANREALKISVFMNVFNVHSQRSPVDGAISKVEYFPGAYLNAAVDKASTENERNAIVIETAGGQTVTSVQIAGLIARRILCYVRAGEPLTRGQRYGFIRFGSRVDVYLPVGSRPRVSIGEKVSASSTILAEL.

Ser-182 (schiff-base intermediate with substrate; via pyruvic acid) is an active-site residue. Ser-182 bears the Pyruvic acid (Ser); by autocatalysis mark.

Belongs to the phosphatidylserine decarboxylase family. PSD-A subfamily. In terms of assembly, heterodimer of a large membrane-associated beta subunit and a small pyruvoyl-containing alpha subunit. Pyruvate is required as a cofactor. Post-translationally, is synthesized initially as an inactive proenzyme. Formation of the active enzyme involves a self-maturation process in which the active site pyruvoyl group is generated from an internal serine residue via an autocatalytic post-translational modification. Two non-identical subunits are generated from the proenzyme in this reaction, and the pyruvate is formed at the N-terminus of the alpha chain, which is derived from the carboxyl end of the proenzyme. The post-translation cleavage follows an unusual pathway, termed non-hydrolytic serinolysis, in which the side chain hydroxyl group of the serine supplies its oxygen atom to form the C-terminus of the beta chain, while the remainder of the serine residue undergoes an oxidative deamination to produce ammonia and the pyruvoyl prosthetic group on the alpha chain.

The protein localises to the cell membrane. The catalysed reaction is a 1,2-diacyl-sn-glycero-3-phospho-L-serine + H(+) = a 1,2-diacyl-sn-glycero-3-phosphoethanolamine + CO2. The protein operates within phospholipid metabolism; phosphatidylethanolamine biosynthesis; phosphatidylethanolamine from CDP-diacylglycerol: step 2/2. In terms of biological role, catalyzes the formation of phosphatidylethanolamine (PtdEtn) from phosphatidylserine (PtdSer). In Paraburkholderia xenovorans (strain LB400), this protein is Phosphatidylserine decarboxylase proenzyme.